Here is a 386-residue protein sequence, read N- to C-terminus: Ferrochelatase (386 aa).

The Fe cation site is built by histidine 196 and glutamate 277.

It belongs to the ferrochelatase family.

It is found in the cytoplasm. The catalysed reaction is heme b + 2 H(+) = protoporphyrin IX + Fe(2+). It participates in porphyrin-containing compound metabolism; protoheme biosynthesis; protoheme from protoporphyrin-IX: step 1/1. Catalyzes the ferrous insertion into protoporphyrin IX. The sequence is that of Ferrochelatase from Picosynechococcus sp. (strain ATCC 27264 / PCC 7002 / PR-6) (Agmenellum quadruplicatum).